A 393-amino-acid chain; its full sequence is Anhydro-N-acetylmuramic acid kinase (393 aa).

9–16 (GTSADGVD) contacts ATP.

Belongs to the anhydro-N-acetylmuramic acid kinase family.

The catalysed reaction is 1,6-anhydro-N-acetyl-beta-muramate + ATP + H2O = N-acetyl-D-muramate 6-phosphate + ADP + H(+). It participates in amino-sugar metabolism; 1,6-anhydro-N-acetylmuramate degradation. It functions in the pathway cell wall biogenesis; peptidoglycan recycling. Functionally, catalyzes the specific phosphorylation of 1,6-anhydro-N-acetylmuramic acid (anhMurNAc) with the simultaneous cleavage of the 1,6-anhydro ring, generating MurNAc-6-P. Is required for the utilization of anhMurNAc either imported from the medium or derived from its own cell wall murein, and thus plays a role in cell wall recycling. This chain is Anhydro-N-acetylmuramic acid kinase, found in Acidithiobacillus ferrooxidans (strain ATCC 23270 / DSM 14882 / CIP 104768 / NCIMB 8455) (Ferrobacillus ferrooxidans (strain ATCC 23270)).